The sequence spans 194 residues: Peptidyl-tRNA hydrolase (194 aa).

His22 (proton acceptor) is an active-site residue. TRNA is bound by residues Tyr67, Asn69, and Asn115.

The protein belongs to the PTH family. In terms of assembly, monomer.

It is found in the cytoplasm. It carries out the reaction an N-acyl-L-alpha-aminoacyl-tRNA + H2O = an N-acyl-L-amino acid + a tRNA + H(+). Functionally, hydrolyzes ribosome-free peptidyl-tRNAs (with 1 or more amino acids incorporated), which drop off the ribosome during protein synthesis, or as a result of ribosome stalling. Its function is as follows. Catalyzes the release of premature peptidyl moieties from peptidyl-tRNA molecules trapped in stalled 50S ribosomal subunits, and thus maintains levels of free tRNAs and 50S ribosomes. The sequence is that of Peptidyl-tRNA hydrolase from Granulibacter bethesdensis (strain ATCC BAA-1260 / CGDNIH1).